Here is an 875-residue protein sequence, read N- to C-terminus: Probable ATP-dependent RNA helicase DDX10 (875 aa).

Residues 1 to 43 are disordered; it reads MGKTANSPGSGARPDPVRSFNRWKKKHSHRQNKKKQLRKQLKK. Phosphothreonine is present on Thr4. Position 7 is a phosphoserine (Ser7). The segment covering 21–41 has biased composition (basic residues); sequence NRWKKKHSHRQNKKKQLRKQL. The short motif at 69 to 97 is the Q motif element; it reads TRFSDFPLSKKTLKGLQEAQYRLVTEIQK. ATP contacts are provided by residues 89-91, Gln96, and 113-120; these read YRL and AKTGSGKT. The region spanning 100-274 is the Helicase ATP-binding domain; it reads IGLALQGKDV…RLSLKNPEYV (175 aa). A DEAD box motif is present at residues 222–225; the sequence is DEAD. The Helicase C-terminal domain maps to 287-448; sequence TLEQNYIVCE…EIKINPEKLI (162 aa). Ser539 is modified (phosphoserine). Lys555 bears the N6-acetyllysine mark. Residues 562–631 form a disordered region; the sequence is GGKRLEGTEH…QFLDRDEEEE (70 aa). Positions 564-575 are enriched in basic and acidic residues; it reads KRLEGTEHRQDN. Residue Thr577 is modified to Phosphothreonine. Positions 577-593 are enriched in acidic residues; it reads TGNEEQEEEEDDEEEME. Positions 603-613 are enriched in polar residues; it reads QAPSLPNTSEA. A Glycyl lysine isopeptide (Lys-Gly) (interchain with G-Cter in SUMO2) cross-link involves residue Lys649. The tract at residues 703 to 850 is disordered; the sequence is MQKSAIKDAE…HNRKKARWDT (148 aa). The span at 727–741 shows a compositional bias: basic and acidic residues; sequence ERLQEEDKFDKEEYR. Positions 742–751 are enriched in basic residues; the sequence is KKIKAKHREK. Residues 752 to 771 are compositionally biased toward basic and acidic residues; the sequence is RLKEREARREANKRQAKAKD. Positions 772 to 790 are enriched in acidic residues; it reads EEEAFLDWSDDDDDDDDGF. Residue Ser780 is modified to Phosphoserine. The span at 812 to 821 shows a compositional bias: basic and acidic residues; that stretch reads MENKISDTKK. Ser831 is subject to Phosphoserine.

The protein belongs to the DEAD box helicase family. DDX10/DBP4 subfamily. Interacts with AIM2; this interaction promotes AIM2 stability. Interacts with SCNA; this interaction causes DDX10 mislocalization to the nucleoplasm and cytoplasmic inclusions. In terms of tissue distribution, high in testis but widely expressed.

The protein localises to the cytoplasm. It localises to the nucleus. The protein resides in the nucleolus. It catalyses the reaction ATP + H2O = ADP + phosphate + H(+). Its function is as follows. Putative ATP-dependent RNA helicase that plays various role in innate immunity or inflammation. Plays a role in the enhancement of AIM2-induced inflammasome activation by interacting with AIM2 and stabilizing its protein level. Negatively regulates viral infection by promoting interferon beta production and interferon stimulated genes/ISGs expression. This chain is Probable ATP-dependent RNA helicase DDX10 (DDX10), found in Homo sapiens (Human).